The chain runs to 664 residues: Macrolide export ATP-binding/permease protein MacB (664 aa).

An ABC transporter domain is found at 8 to 246 (LEVHNLVREF…ELNKDPDAAP (239 aa)). 44–51 (GQSGSGKS) contributes to the ATP binding site. The next 4 membrane-spanning stretches (helical) occupy residues 287-307 (FLTM…VALG), 543-563 (IAVI…LVSV), 587-607 (FLIE…LLSL), and 629-649 (SIVA…FLPA).

Belongs to the ABC transporter superfamily. Macrolide exporter (TC 3.A.1.122) family. As to quaternary structure, homodimer. Part of the tripartite efflux system MacAB-TolC, which is composed of an inner membrane transporter, MacB, a periplasmic membrane fusion protein, MacA, and an outer membrane component, TolC. The complex forms a large protein conduit and can translocate molecules across both the inner and outer membranes. Interacts with MacA.

The protein resides in the cell inner membrane. Functionally, part of the tripartite efflux system MacAB-TolC. MacB is a non-canonical ABC transporter that contains transmembrane domains (TMD), which form a pore in the inner membrane, and an ATP-binding domain (NBD), which is responsible for energy generation. Confers resistance against macrolides. The sequence is that of Macrolide export ATP-binding/permease protein MacB from Acinetobacter baylyi (strain ATCC 33305 / BD413 / ADP1).